Consider the following 232-residue polypeptide: Enolase-phosphatase E1 (232 aa).

This sequence belongs to the HAD-like hydrolase superfamily. MasA/MtnC family. In terms of assembly, monomer. The cofactor is Mg(2+).

It carries out the reaction 5-methylsulfanyl-2,3-dioxopentyl phosphate + H2O = 1,2-dihydroxy-5-(methylsulfanyl)pent-1-en-3-one + phosphate. Its pathway is amino-acid biosynthesis; L-methionine biosynthesis via salvage pathway; L-methionine from S-methyl-5-thio-alpha-D-ribose 1-phosphate: step 3/6. It functions in the pathway amino-acid biosynthesis; L-methionine biosynthesis via salvage pathway; L-methionine from S-methyl-5-thio-alpha-D-ribose 1-phosphate: step 4/6. In terms of biological role, bifunctional enzyme that catalyzes the enolization of 2,3-diketo-5-methylthiopentyl-1-phosphate (DK-MTP-1-P) into the intermediate 2-hydroxy-3-keto-5-methylthiopentenyl-1-phosphate (HK-MTPenyl-1-P), which is then dephosphorylated to form the acireductone 1,2-dihydroxy-3-keto-5-methylthiopentene (DHK-MTPene). In Xanthomonas campestris pv. campestris (strain 8004), this protein is Enolase-phosphatase E1.